We begin with the raw amino-acid sequence, 249 residues long: 5'-nucleotidase SurE (249 aa).

A divalent metal cation is bound by residues aspartate 9, aspartate 10, serine 40, and asparagine 92.

It belongs to the SurE nucleotidase family. A divalent metal cation is required as a cofactor.

It localises to the cytoplasm. The enzyme catalyses a ribonucleoside 5'-phosphate + H2O = a ribonucleoside + phosphate. Nucleotidase that shows phosphatase activity on nucleoside 5'-monophosphates. The protein is 5'-nucleotidase SurE of Shewanella frigidimarina (strain NCIMB 400).